We begin with the raw amino-acid sequence, 685 residues long: Polyphosphate kinase (685 aa).

N45 contributes to the ATP binding site. Mg(2+) is bound by residues R375 and R405. The active-site Phosphohistidine intermediate is the H435. ATP is bound by residues Y468, R564, and H592.

Belongs to the polyphosphate kinase 1 (PPK1) family. Requires Mg(2+) as cofactor. An intermediate of this reaction is the autophosphorylated ppk in which a phosphate is covalently linked to a histidine residue through a N-P bond.

The catalysed reaction is [phosphate](n) + ATP = [phosphate](n+1) + ADP. In terms of biological role, catalyzes the reversible transfer of the terminal phosphate of ATP to form a long-chain polyphosphate (polyP). The polypeptide is Polyphosphate kinase (Neisseria meningitidis serogroup B (strain ATCC BAA-335 / MC58)).